We begin with the raw amino-acid sequence, 339 residues long: Transcription initiation factor IIB (339 aa).

A TFIIB-type zinc finger spans residues 39-70 (EELICPVCGSKSIIKDYERAEIVCEMCGCVLQ). Positions 43, 46, 62, and 65 each coordinate Zn(2+). 2 consecutive repeat copies span residues 156–239 (SELD…SREL) and 250–331 (DYVP…ELTE).

Belongs to the TFIIB family.

In terms of biological role, stabilizes TBP binding to an archaeal box-A promoter. Also responsible for recruiting RNA polymerase II to the pre-initiation complex (DNA-TBP-TFIIB). This is Transcription initiation factor IIB from Methanococcus maripaludis (strain C5 / ATCC BAA-1333).